The sequence spans 267 residues: MAPRPAMSHSSAFLLPSPSAAAAGADADGAAYALLVLNQRLPRFAPRLWDRAQVRVCADGGANRVFDGMPELFPGQDPDEVRRRYKPDVIKGDLDSVRPEVKEYYSNMGTQIVDESHDQDTTDLHKCVAFITENSAIPNKSNLCIFALGALGGRFDHEMGNINVLHLFPNNRIILLSDDCLIFLLPRTHTHNIHIERSIEGPHCGLIPIGAPSATTTTTGLQWNLDNTSMSFGGLISTSNIVREESTVVTITSDSDLIWTISLRHHS.

This sequence belongs to the thiamine pyrophosphokinase family.

Its subcellular location is the cytoplasm. The protein localises to the cytosol. It catalyses the reaction thiamine + ATP = thiamine diphosphate + AMP + H(+). The protein operates within cofactor biosynthesis; thiamine diphosphate biosynthesis; thiamine diphosphate from thiamine: step 1/1. Functionally, catalyzes the phosphorylation of thiamine to thiamine pyrophosphate (TPP). TPP is an active cofactor for enzymes involved in glycolysis and energy production. Plant leaves require high levels of TPP for photosynthesis and carbohydrate metabolism. This is Thiamine pyrophosphokinase 3 (TPK3) from Oryza sativa subsp. japonica (Rice).